Consider the following 341-residue polypeptide: Serpentine receptor class epsilon-8 (341 aa).

7 helical membrane passes run 37–57, 64–86, 101–123, 143–163, 169–189, 235–255, and 264–284; these read VGFLVFSWIEFLYLFYLFIFI, LTFLFMNYGGQYFCSMLSRCIIV, WILVANFARTVCLFIAMYILPIF, IWVSLMILSIFHPLVFASAIA, IPVVVHVISFFIVNIIGYIGI, VQISILFFNIGCCSILLMDHF, and WSYVCFNFFALVYGITVPIIL.

It belongs to the nematode receptor-like protein sre family.

The protein localises to the membrane. The chain is Serpentine receptor class epsilon-8 (sre-8) from Caenorhabditis elegans.